Reading from the N-terminus, the 147-residue chain is MALKRIQKELTDLQRDPPAQCSAGPVGDDLFHWQATIMGPNDSPYQGGVFFLTIHFPTDYPFKPPKVAFTTKIYHPNINSNGSICLDILRSQWSPALTVSKVLLSICSLLCDPNPDDPLVPEIAHTYKADREKYNRLAREWTQKYAM.

The 147-residue stretch at 1–147 folds into the UBC core domain; sequence MALKRIQKEL…AREWTQKYAM (147 aa). Residue Cys-85 is the Glycyl thioester intermediate of the active site.

Belongs to the ubiquitin-conjugating enzyme family.

It catalyses the reaction S-ubiquitinyl-[E1 ubiquitin-activating enzyme]-L-cysteine + [E2 ubiquitin-conjugating enzyme]-L-cysteine = [E1 ubiquitin-activating enzyme]-L-cysteine + S-ubiquitinyl-[E2 ubiquitin-conjugating enzyme]-L-cysteine.. It functions in the pathway protein modification; protein ubiquitination. In terms of biological role, accepts ubiquitin from the E1 complex and catalyzes its covalent attachment to other proteins. In vitro able to promote polyubiquitination using all 7 ubiquitin Lys residues, but may prefer 'Lys-11' and 'Lys-48'-linked polyubiquitination. This chain is Ubiquitin-conjugating enzyme E2 D4 (UBE2D4), found in Homo sapiens (Human).